A 171-amino-acid polypeptide reads, in one-letter code: S-ribosylhomocysteine lyase (171 aa).

His54, His58, and Cys128 together coordinate Fe cation.

It belongs to the LuxS family. Homodimer. Requires Fe cation as cofactor.

It catalyses the reaction S-(5-deoxy-D-ribos-5-yl)-L-homocysteine = (S)-4,5-dihydroxypentane-2,3-dione + L-homocysteine. Functionally, involved in the synthesis of autoinducer 2 (AI-2) which is secreted by bacteria and is used to communicate both the cell density and the metabolic potential of the environment. The regulation of gene expression in response to changes in cell density is called quorum sensing. Catalyzes the transformation of S-ribosylhomocysteine (RHC) to homocysteine (HC) and 4,5-dihydroxy-2,3-pentadione (DPD). This Pectobacterium carotovorum subsp. carotovorum (strain PC1) protein is S-ribosylhomocysteine lyase.